A 543-amino-acid chain; its full sequence is Chaperonin GroEL (543 aa).

Residues 29 to 32, 86 to 90, glycine 413, 478 to 480, and aspartate 494 each bind ATP; these read TLGP, DGTTT, and NAA.

The protein belongs to the chaperonin (HSP60) family. Forms a cylinder of 14 subunits composed of two heptameric rings stacked back-to-back. Interacts with the co-chaperonin GroES.

Its subcellular location is the cytoplasm. The catalysed reaction is ATP + H2O + a folded polypeptide = ADP + phosphate + an unfolded polypeptide.. Its function is as follows. Together with its co-chaperonin GroES, plays an essential role in assisting protein folding. The GroEL-GroES system forms a nano-cage that allows encapsulation of the non-native substrate proteins and provides a physical environment optimized to promote and accelerate protein folding. This chain is Chaperonin GroEL, found in Lactobacillus johnsonii (strain CNCM I-12250 / La1 / NCC 533).